Here is a 388-residue protein sequence, read N- to C-terminus: Chorismate synthase (388 aa).

NADP(+)-binding residues include Arg-39 and Arg-45. FMN-binding positions include 132 to 134 (RSS), 251 to 252 (NA), Gly-296, 311 to 315 (KPIPT), and Arg-337.

As to quaternary structure, homotetramer. Requires FMNH2 as cofactor.

It catalyses the reaction 5-O-(1-carboxyvinyl)-3-phosphoshikimate = chorismate + phosphate. It functions in the pathway metabolic intermediate biosynthesis; chorismate biosynthesis; chorismate from D-erythrose 4-phosphate and phosphoenolpyruvate: step 7/7. Catalyzes the anti-1,4-elimination of the C-3 phosphate and the C-6 proR hydrogen from 5-enolpyruvylshikimate-3-phosphate (EPSP) to yield chorismate, which is the branch point compound that serves as the starting substrate for the three terminal pathways of aromatic amino acid biosynthesis. This reaction introduces a second double bond into the aromatic ring system. The protein is Chorismate synthase of Staphylococcus aureus.